A 533-amino-acid polypeptide reads, in one-letter code: Acid-sensing ion channel 2 (533 aa).

A compositionally biased stretch (basic and acidic residues) spans 1 to 16; the sequence is MDLKEACGSEASRETE. Residues 1-23 are disordered; sequence MDLKEACGSEASRETESGGMGSL. At 1-68 the chain is on the cytoplasmic side; it reads MDLKEACGSE…STSRRLLWSA (68 aa). A helical transmembrane segment spans residues 69–89; it reads ALLASLVLLVLESTERLAYFL. At 90–445 the chain is on the extracellular side; the sequence is SYPHVTSVDA…ETIEQKKAYE (356 aa). Intrachain disulfides connect cysteine 113–cysteine 214, cysteine 310–cysteine 385, cysteine 328–cysteine 381, cysteine 332–cysteine 379, cysteine 341–cysteine 363, and cysteine 343–cysteine 355. Asparagine 163 carries an N-linked (GlcNAc...) asparagine glycan. Asparagine 386 and asparagine 413 each carry an N-linked (GlcNAc...) asparagine glycan. The helical transmembrane segment at 446–466 threads the bilayer; that stretch reads VAGLLGDIGGQMGLFIGASIL. Residues 462 to 464 carry the GAS motif; ion selectivity filter motif; that stretch reads GAS. Over 467 to 533 the chain is Cytoplasmic; the sequence is TLLELFDYAY…TLGTLEEIAC (67 aa).

Belongs to the amiloride-sensitive sodium channel (TC 1.A.6) family. ASIC2 subfamily. In terms of assembly, can form homotrimers; probably non-functional. Heterotrimer; could form functional heterotrimers producing channel with specific properties depending on their composition. Expressed in central nervous system.

It localises to the cell membrane. It catalyses the reaction Na(+)(in) = Na(+)(out). With respect to regulation, inhibited by the diuretic drug amiloride. In terms of biological role, could form pH-gated heterotrimeric sodium channels that act as postsynaptic excitatory sensors in the nervous system, generating rapid, transient inward currents that fully desensitize upon extracellular acidification. The chain is Acid-sensing ion channel 2 (asic2) from Danio rerio (Zebrafish).